The sequence spans 93 residues: Defensin-like protein 209 (93 aa).

The signal sequence occupies residues 1–19; the sequence is MKITILFLTLLVLSSSCTS. Disulfide bonds link Cys63–Cys80, Cys66–Cys85, and Cys70–Cys87.

It belongs to the DEFL family.

It is found in the secreted. This is Defensin-like protein 209 from Arabidopsis thaliana (Mouse-ear cress).